A 521-amino-acid chain; its full sequence is Potassium/proton antiporter CemA (521 aa).

The next 5 membrane-spanning stretches (helical) occupy residues Phe68–Ile88, Ala294–Pro314, Ile399–Gly419, Ile446–Ile466, and Ile481–Ile501.

Belongs to the CemA family.

The protein localises to the plastid. Its subcellular location is the chloroplast inner membrane. The catalysed reaction is K(+)(in) + H(+)(out) = K(+)(out) + H(+)(in). In terms of biological role, contributes to K(+)/H(+) antiport activity by supporting proton efflux to control proton extrusion and homeostasis in chloroplasts in a light-dependent manner to modulate photosynthesis. Prevents excessive induction of non-photochemical quenching (NPQ) under continuous-light conditions. Indirectly promotes efficient inorganic carbon uptake into chloroplasts. The chain is Potassium/proton antiporter CemA from Huperzia lucidula (Shining clubmoss).